The sequence spans 457 residues: Chromosomal replication initiator protein DnaA (457 aa).

Residues 1–77 form a domain I, interacts with DnaA modulators region; the sequence is MDTNNNIEKE…EILSQNKVGM (77 aa). Residues 77–108 are domain II; the sequence is MHLAHSVDVRIEVAPKIQVNAQSNINYKATKT. A domain III, AAA+ region region spans residues 109-323; it reads SVKDSYTFEN…GAIIKISVNA (215 aa). 4 residues coordinate ATP: Gly-153, Gly-155, Lys-156, and Thr-157. Residues 324-457 are domain IV, binds dsDNA; the sequence is NLMNATIDLN…DKKTAFNSSE (134 aa).

Belongs to the DnaA family. As to quaternary structure, oligomerizes as a right-handed, spiral filament on DNA at oriC.

It localises to the cytoplasm. In terms of biological role, plays an essential role in the initiation and regulation of chromosomal replication. ATP-DnaA binds to the origin of replication (oriC) to initiate formation of the DNA replication initiation complex once per cell cycle. Binds the DnaA box (a 9 base pair repeat at the origin) and separates the double-stranded (ds)DNA. Forms a right-handed helical filament on oriC DNA; dsDNA binds to the exterior of the filament while single-stranded (ss)DNA is stabiized in the filament's interior. The ATP-DnaA-oriC complex binds and stabilizes one strand of the AT-rich DNA unwinding element (DUE), permitting loading of DNA polymerase. After initiation quickly degrades to an ADP-DnaA complex that is not apt for DNA replication. Binds acidic phospholipids. The protein is Chromosomal replication initiator protein DnaA of Helicobacter pylori (strain J99 / ATCC 700824) (Campylobacter pylori J99).